Reading from the N-terminus, the 325-residue chain is tRNA(Ile)-lysidine synthase (325 aa).

34–39 (SGGADS) provides a ligand contact to ATP.

The protein belongs to the tRNA(Ile)-lysidine synthase family.

Its subcellular location is the cytoplasm. It catalyses the reaction cytidine(34) in tRNA(Ile2) + L-lysine + ATP = lysidine(34) in tRNA(Ile2) + AMP + diphosphate + H(+). In terms of biological role, ligates lysine onto the cytidine present at position 34 of the AUA codon-specific tRNA(Ile) that contains the anticodon CAU, in an ATP-dependent manner. Cytidine is converted to lysidine, thus changing the amino acid specificity of the tRNA from methionine to isoleucine. This chain is tRNA(Ile)-lysidine synthase, found in Rhodococcus jostii (strain RHA1).